The chain runs to 254 residues: Protein N-terminal and lysine N-methyltransferase EFM7 (254 aa).

S-adenosyl-L-methionine is bound by residues tryptophan 57, 84 to 86, aspartate 106, tryptophan 138, and serine 165; that span reads GAA.

It belongs to the class I-like SAM-binding methyltransferase superfamily. EFM7 family.

Its subcellular location is the cytoplasm. In terms of biological role, S-adenosyl-L-methionine-dependent protein methyltransferase that trimethylates the N-terminal glycine 'Gly-2' of elongation factor 1-alpha, before also catalyzing the mono- and dimethylation of 'Lys-3'. This chain is Protein N-terminal and lysine N-methyltransferase EFM7, found in Debaryomyces hansenii (strain ATCC 36239 / CBS 767 / BCRC 21394 / JCM 1990 / NBRC 0083 / IGC 2968) (Yeast).